The chain runs to 252 residues: Ribosome assembly factor mrt4 (252 aa).

It belongs to the universal ribosomal protein uL10 family. As to quaternary structure, associates with the pre-60S ribosomal particle.

It localises to the nucleus. Its subcellular location is the nucleolus. The protein resides in the cytoplasm. Component of the ribosome assembly machinery. Nuclear paralog of the ribosomal protein P0, it binds pre-60S subunits at an early stage of assembly in the nucleolus, and is replaced by P0 in cytoplasmic pre-60S subunits and mature 80S ribosomes. The chain is Ribosome assembly factor mrt4 from Neurospora crassa (strain ATCC 24698 / 74-OR23-1A / CBS 708.71 / DSM 1257 / FGSC 987).